Reading from the N-terminus, the 116-residue chain is Spexin (116 aa).

An N-terminal signal peptide occupies residues 1-26 (MKGLRSLAATTLALFLVFVFLGNSSC). Positions 27–35 (APQRLLERR) are excised as a propeptide. A Glutamine amide modification is found at glutamine 49. 2 propeptides span residues 50–116 (GRRF…LLNW) and 74–116 (PNPQ…LLNW). Residues 55 to 73 (SDQSRRKDLSDRPLPERRS) show a composition bias toward basic and acidic residues. The tract at residues 55-77 (SDQSRRKDLSDRPLPERRSPNPQ) is disordered.

It belongs to the spexin family. Expressed in the type I glomic cells within the carotid body (at protein level). Expressed predominantly in pancreas, testis, kidney, brain and placenta. Expressed in submucosal layer of esophagus and stomach fundus.

Its subcellular location is the secreted. It is found in the extracellular space. The protein resides in the cytoplasmic vesicle. It localises to the secretory vesicle. Plays a role as a central modulator of cardiovascular and renal function and nociception. Also plays a role in energy metabolism and storage. Inhibits adrenocortical cell proliferation with minor stimulation on corticosteroid release. Functionally, acts as a ligand for galanin receptors GALR2 and GALR3. Intracerebroventricular administration of the peptide induces an increase in arterial blood pressure, a decrease in both heart rate and renal excretion and delayed natriuresis. Intraventricular administration of the peptide induces antinociceptive activity. Also induces contraction of muscarinic-like stomach smooth muscles. Intraperitoneal administration of the peptide induces a reduction in food consumption and body weight. Inhibits long chain fatty acid uptake into adipocytes. Its function is as follows. Intracerebroventricular administration of the peptide induces a decrease in heart rate, but no change in arterial pressure, and an increase in urine flow rate. Intraventricular administration of the peptide induces antinociceptive activity. The protein is Spexin (SPX) of Homo sapiens (Human).